A 266-amino-acid polypeptide reads, in one-letter code: Probable matrix protein (266 aa).

A disordered region spans residues 158–177; sequence ACSAGTGGTEEGDSDTEEEP. Acidic residues predominate over residues 167–177; that stretch reads EEGDSDTEEEP.

The protein resides in the virion. In terms of biological role, may play a role in virion budding and release by binding the ribonucleocapsid and the host membrane. In Ixodidae (hardbacked ticks), this protein is Probable matrix protein.